Here is a 402-residue protein sequence, read N- to C-terminus: Imidazolonepropionase (402 aa).

His-66 and His-68 together coordinate Fe(3+). The Zn(2+) site is built by His-66 and His-68. 4-imidazolone-5-propanoate-binding residues include Arg-75, Tyr-138, and His-171. Tyr-138 lines the N-formimidoyl-L-glutamate pocket. His-236 provides a ligand contact to Fe(3+). Position 236 (His-236) interacts with Zn(2+). Gln-239 is a binding site for 4-imidazolone-5-propanoate. A Fe(3+)-binding site is contributed by Asp-311. Residue Asp-311 participates in Zn(2+) binding. N-formimidoyl-L-glutamate contacts are provided by Asn-313 and Gly-315. Thr-316 is a 4-imidazolone-5-propanoate binding site.

Belongs to the metallo-dependent hydrolases superfamily. HutI family. The cofactor is Zn(2+). Requires Fe(3+) as cofactor.

The protein resides in the cytoplasm. The enzyme catalyses 4-imidazolone-5-propanoate + H2O = N-formimidoyl-L-glutamate. The protein operates within amino-acid degradation; L-histidine degradation into L-glutamate; N-formimidoyl-L-glutamate from L-histidine: step 3/3. Functionally, catalyzes the hydrolytic cleavage of the carbon-nitrogen bond in imidazolone-5-propanoate to yield N-formimidoyl-L-glutamate. It is the third step in the universal histidine degradation pathway. This Pseudomonas aeruginosa (strain UCBPP-PA14) protein is Imidazolonepropionase.